The primary structure comprises 179 residues: Large ribosomal subunit protein uL5 (179 aa).

This sequence belongs to the universal ribosomal protein uL5 family. As to quaternary structure, part of the 50S ribosomal subunit; part of the 5S rRNA/L5/L18/L25 subcomplex. Contacts the 5S rRNA and the P site tRNA. Forms a bridge to the 30S subunit in the 70S ribosome.

This is one of the proteins that bind and probably mediate the attachment of the 5S RNA into the large ribosomal subunit, where it forms part of the central protuberance. In the 70S ribosome it contacts protein S13 of the 30S subunit (bridge B1b), connecting the 2 subunits; this bridge is implicated in subunit movement. Contacts the P site tRNA; the 5S rRNA and some of its associated proteins might help stabilize positioning of ribosome-bound tRNAs. In Clostridium beijerinckii (strain ATCC 51743 / NCIMB 8052) (Clostridium acetobutylicum), this protein is Large ribosomal subunit protein uL5.